Reading from the N-terminus, the 56-residue chain is Large ribosomal subunit protein bL32 (56 aa).

The disordered stretch occupies residues 1-35 (MAVQQNKPTRSKRGMRRSHDALTATHVSVDKTSGE).

This sequence belongs to the bacterial ribosomal protein bL32 family.

The chain is Large ribosomal subunit protein bL32 from Proteus mirabilis (strain HI4320).